Here is a 302-residue protein sequence, read N- to C-terminus: Glycine N-acyltransferase-like protein 1 (302 aa).

It belongs to the glycine N-acyltransferase family. In terms of tissue distribution, expressed in liver and kidney and, at lower levels, in pancreas, testis, ovary and stomach.

It carries out the reaction an acyl-CoA + L-glutamine = an N(2)-acyl-L-glutamine + CoA + H(+). Functionally, acyltransferase which transfers an acyl group to the N-terminus of glutamine. Can use phenylacetyl-CoA as an acyl donor. The chain is Glycine N-acyltransferase-like protein 1 from Homo sapiens (Human).